Here is a 181-residue protein sequence, read N- to C-terminus: ATP synthase subunit b, chloroplastic (181 aa).

Residues Ile-28 to Leu-50 traverse the membrane as a helical segment.

The protein belongs to the ATPase B chain family. As to quaternary structure, F-type ATPases have 2 components, F(1) - the catalytic core - and F(0) - the membrane proton channel. F(1) has five subunits: alpha(3), beta(3), gamma(1), delta(1), epsilon(1). F(0) has four main subunits: a(1), b(1), b'(1) and c(10-14). The alpha and beta chains form an alternating ring which encloses part of the gamma chain. F(1) is attached to F(0) by a central stalk formed by the gamma and epsilon chains, while a peripheral stalk is formed by the delta, b and b' chains.

It localises to the plastid. The protein resides in the chloroplast thylakoid membrane. Its function is as follows. F(1)F(0) ATP synthase produces ATP from ADP in the presence of a proton or sodium gradient. F-type ATPases consist of two structural domains, F(1) containing the extramembraneous catalytic core and F(0) containing the membrane proton channel, linked together by a central stalk and a peripheral stalk. During catalysis, ATP synthesis in the catalytic domain of F(1) is coupled via a rotary mechanism of the central stalk subunits to proton translocation. Component of the F(0) channel, it forms part of the peripheral stalk, linking F(1) to F(0). The chain is ATP synthase subunit b, chloroplastic from Cryptomeria japonica (Japanese cedar).